The primary structure comprises 630 residues: Cyclin-T1-2 (630 aa).

Low complexity predominate over residues 288–297; the sequence is QSSLSVSSSS. Disordered regions lie at residues 288–313 and 410–439; these read QSSL…DSSQ and RSGD…VEPP. Positions 421 to 439 are enriched in polar residues; it reads GGSSLTDVDSKSTQSVEPP.

Belongs to the cyclin family. Cyclin T subfamily.

This Oryza sativa subsp. japonica (Rice) protein is Cyclin-T1-2 (CYCT1_2).